The chain runs to 358 residues: DNA polymerase IV (358 aa).

The region spanning Ile6 to Gly187 is the UmuC domain. 2 residues coordinate Mg(2+): Asp10 and Asp105. Residue Glu106 is part of the active site.

Belongs to the DNA polymerase type-Y family. In terms of assembly, monomer. Mg(2+) serves as cofactor.

It is found in the cytoplasm. The enzyme catalyses DNA(n) + a 2'-deoxyribonucleoside 5'-triphosphate = DNA(n+1) + diphosphate. Its function is as follows. Poorly processive, error-prone DNA polymerase involved in untargeted mutagenesis. Copies undamaged DNA at stalled replication forks, which arise in vivo from mismatched or misaligned primer ends. These misaligned primers can be extended by PolIV. Exhibits no 3'-5' exonuclease (proofreading) activity. May be involved in translesional synthesis, in conjunction with the beta clamp from PolIII. This chain is DNA polymerase IV, found in Staphylococcus haemolyticus (strain JCSC1435).